The chain runs to 281 residues: Digeranylgeranylglyceryl phosphate synthase (281 aa).

Transmembrane regions (helical) follow at residues 14–34 (AMAA…LSSA), 38–58 (VSLS…VTGA), 95–115 (LFLF…CGII), 149–169 (FLFG…VLFL), 207–227 (ASYI…VPYL), 235–255 (YLFV…QILG), and 259–279 (AARS…SFIV).

It belongs to the UbiA prenyltransferase family. DGGGP synthase subfamily. The cofactor is Mg(2+).

The protein resides in the cell membrane. The catalysed reaction is sn-3-O-(geranylgeranyl)glycerol 1-phosphate + (2E,6E,10E)-geranylgeranyl diphosphate = 2,3-bis-O-(geranylgeranyl)-sn-glycerol 1-phosphate + diphosphate. Its pathway is membrane lipid metabolism; glycerophospholipid metabolism. In terms of biological role, prenyltransferase that catalyzes the transfer of the geranylgeranyl moiety of geranylgeranyl diphosphate (GGPP) to the C2 hydroxyl of (S)-3-O-geranylgeranylglyceryl phosphate (GGGP). This reaction is the second ether-bond-formation step in the biosynthesis of archaeal membrane lipids. This is Digeranylgeranylglyceryl phosphate synthase from Methanococcoides burtonii (strain DSM 6242 / NBRC 107633 / OCM 468 / ACE-M).